The following is a 342-amino-acid chain: uncharacterized protein (342 aa).

Belongs to the cycloisomerase 2 family.

This is an uncharacterized protein from Staphylococcus aureus (strain NCTC 8325 / PS 47).